We begin with the raw amino-acid sequence, 956 residues long: Golgin candidate 5 (956 aa).

Disordered regions lie at residues 70–230 (MSFM…QHKI) and 278–298 (IFESDGSPYESSIPKRSSSDE). 2 stretches are compositionally biased toward basic and acidic residues: residues 77-89 (SDEKPDTLEDSVR) and 118-129 (ANKETNVRREAD). Composition is skewed to polar residues over residues 160 to 177 (EYSLQTPESSGYKTSLQP) and 184 to 193 (TASQDSQPEQ). Positions 206-219 (SEAKEVTVENKDTV) are enriched in basic and acidic residues. The stretch at 333-765 (SDSADVILEL…LIQKDLEREK (433 aa)) forms a coiled coil. The residue at position 793 (Ser-793) is a Phosphoserine. Residues 851–951 (SAYEATLRQK…EMYREQVNML (101 aa)) adopt a coiled-coil conformation.

Interacts with RABH1B and RABH1C, but not with RABD1 or RABD2A.

It is found in the golgi apparatus. The protein localises to the cytoplasm. Its function is as follows. Golgi matrix protein playing a role in tethering of vesicles to Golgi membranes and in maintaining the overall structure of the Golgi apparatus. The polypeptide is Golgin candidate 5 (GC5) (Arabidopsis thaliana (Mouse-ear cress)).